The primary structure comprises 354 residues: Ornithine carbamoyltransferase, catabolic (354 aa).

Residues 67 to 70, glutamine 94, arginine 118, and 145 to 148 each bind carbamoyl phosphate; these read STRT and HPTQ. Residues asparagine 177, aspartate 241, and 245-246 contribute to the L-ornithine site; that span reads SM. Residues 284–285 and arginine 329 contribute to the carbamoyl phosphate site; that span reads CL.

The protein belongs to the aspartate/ornithine carbamoyltransferase superfamily. OTCase family.

Its subcellular location is the cytoplasm. The enzyme catalyses carbamoyl phosphate + L-ornithine = L-citrulline + phosphate + H(+). It functions in the pathway amino-acid degradation; L-arginine degradation via ADI pathway; carbamoyl phosphate from L-arginine: step 2/2. Its function is as follows. Reversibly catalyzes the transfer of the carbamoyl group from carbamoyl phosphate (CP) to the N(epsilon) atom of ornithine (ORN) to produce L-citrulline. The polypeptide is Ornithine carbamoyltransferase, catabolic (arcB) (Lactococcus lactis subsp. lactis (strain IL1403) (Streptococcus lactis)).